A 438-amino-acid polypeptide reads, in one-letter code: Serine hydroxymethyltransferase (438 aa).

(6S)-5,6,7,8-tetrahydrofolate-binding positions include Leu-133 and 137 to 139; that span reads GHL. Lys-242 carries the N6-(pyridoxal phosphate)lysine modification.

It belongs to the SHMT family. In terms of assembly, homodimer. Pyridoxal 5'-phosphate serves as cofactor.

The protein resides in the cytoplasm. It carries out the reaction (6R)-5,10-methylene-5,6,7,8-tetrahydrofolate + glycine + H2O = (6S)-5,6,7,8-tetrahydrofolate + L-serine. Its pathway is one-carbon metabolism; tetrahydrofolate interconversion. It participates in amino-acid biosynthesis; glycine biosynthesis; glycine from L-serine: step 1/1. Catalyzes the reversible interconversion of serine and glycine with tetrahydrofolate (THF) serving as the one-carbon carrier. This reaction serves as the major source of one-carbon groups required for the biosynthesis of purines, thymidylate, methionine, and other important biomolecules. Also exhibits THF-independent aldolase activity toward beta-hydroxyamino acids, producing glycine and aldehydes, via a retro-aldol mechanism. The protein is Serine hydroxymethyltransferase of Brucella ovis (strain ATCC 25840 / 63/290 / NCTC 10512).